The primary structure comprises 353 residues: F-box protein At2g14290 (353 aa).

One can recognise an F-box domain in the interval 6 to 58; the sequence is PRTWSELPPDLLGSIFHRLSFTDFHRAKIVCWNWNLSSKLTVPKKIRSPWLML.

This is F-box protein At2g14290 from Arabidopsis thaliana (Mouse-ear cress).